A 636-amino-acid chain; its full sequence is MGRLLDTIDSPTDLKKVPVEQLPALCQEIREQIIQTCARNGGHLGSSLGAVEINVALHHVFSSPQDKLVWDVGHQAYAHKLLTGRREAFRTIRTEGGLAGFPERHESAHDAFGVGHASTAISAALGMIEAKRVTGEPGKVVAVVGDGAMTGGVAFEGLNQAGYLGRNLLVVLNDNEMSISPNVGALSEWFSKKFASRTYNRWRRQVKEFLESVPKGPEAIEIIRHGINATKALVTPGILFEGLGFHYVGPVDGHDVKGLVETFQKLAIFDGPVLLHAITTKGKGYHPAESDKATRGHGLSFFDVATGKPVKKSPGAKAYTDLFAEALCEEMEHDPRVVAITAAMLEGTGLIKAKQRFPDRTYDVGIAEQHAVTFAAGLACEGIRPVVAIYSTFLQRAYDQIIHDVALQKLPVTFALDRGGLVGADGKTHQGAFDLAYLRCVPGLVVMAPSDENELRHMLHTSLQHEGPAALRYPRGAGEGVALEPARVLEIGKGRLVRNVPGKPDVCVVAAGTTLKAALAAAEALAAEGVAATVVDPRFVKPLDEELICAEAARAKRVVTVEEGCLAGGFGTACLEAFERRGLLEAGLGVRRLGIPDEFITHAEQAKQRAWVGIDADAIAAACRALVGDRKARGVA.

Thiamine diphosphate contacts are provided by residues H74 and 115–117 (GHA). D146 serves as a coordination point for Mg(2+). Thiamine diphosphate contacts are provided by residues 147–148 (GA), N175, Y285, and E368. A Mg(2+)-binding site is contributed by N175.

The protein belongs to the transketolase family. DXPS subfamily. In terms of assembly, homodimer. It depends on Mg(2+) as a cofactor. Thiamine diphosphate is required as a cofactor.

It carries out the reaction D-glyceraldehyde 3-phosphate + pyruvate + H(+) = 1-deoxy-D-xylulose 5-phosphate + CO2. It functions in the pathway metabolic intermediate biosynthesis; 1-deoxy-D-xylulose 5-phosphate biosynthesis; 1-deoxy-D-xylulose 5-phosphate from D-glyceraldehyde 3-phosphate and pyruvate: step 1/1. Its function is as follows. Catalyzes the acyloin condensation reaction between C atoms 2 and 3 of pyruvate and glyceraldehyde 3-phosphate to yield 1-deoxy-D-xylulose-5-phosphate (DXP). The protein is 1-deoxy-D-xylulose-5-phosphate synthase of Anaeromyxobacter sp. (strain K).